The sequence spans 472 residues: Sporozoite surface protein P36p (472 aa).

The first 23 residues, 1-23, serve as a signal peptide directing secretion; it reads MMKRRRIFMYYCFCFLLKYVAFS. N-linked (GlcNAc...) asparagine glycosylation is found at Asn-24, Asn-29, Asn-93, Asn-112, and Asn-185. 2 consecutive 6-Cys domains span residues 24–157 and 160–299; these read NVTN…FKKM and KIKG…TSKN. 5 cysteine pairs are disulfide-bonded: Cys-64–Cys-138, Cys-81–Cys-136, Cys-164–Cys-188, Cys-202–Cys-281, and Cys-222–Cys-279. Asn-295, Asn-306, Asn-383, Asn-396, Asn-400, and Asn-416 each carry an N-linked (GlcNAc...) asparagine glycan. The disordered stretch occupies residues 359–385; sequence KMDPSDEDESNENAHNGNRANKDANYS. A lipid anchor (GPI-anchor amidated serine) is attached at Ser-449. The propeptide at 450 to 472 is removed in mature form; that stretch reads SSYYEVFNYFSIAFILIIHMLLW.

The protein localises to the cell surface. Its subcellular location is the cell membrane. Functionally, involved in sporozoite infection of hepatocytes and replication therein. In Plasmodium berghei (strain Anka), this protein is Sporozoite surface protein P36p (P52).